The sequence spans 145 residues: Protein SprT-like (145 aa).

Positions 5-140 (DYVREVSLAD…ACGRCHGRLI (136 aa)) constitute a SprT-like domain. Histidine 64 provides a ligand contact to Zn(2+). Glutamate 65 is a catalytic residue. Residue histidine 68 coordinates Zn(2+).

This sequence belongs to the SprT family. The cofactor is Zn(2+).

It is found in the cytoplasm. The sequence is that of Protein SprT-like from Streptococcus equi subsp. equi (strain 4047).